A 419-amino-acid polypeptide reads, in one-letter code: Squalene synthase R6 (419 aa).

The chain crosses the membrane as a helical span at residues 397–417; it reads TMYLVVLLLGILGVAAAVLMA.

It belongs to the phytoene/squalene synthase family. The cofactor is Mg(2+).

Its subcellular location is the membrane. It catalyses the reaction 2 (2E,6E)-farnesyl diphosphate + NADPH + H(+) = squalene + 2 diphosphate + NADP(+). The catalysed reaction is 2 (2E,6E)-farnesyl diphosphate + NADH + H(+) = squalene + 2 diphosphate + NAD(+). It participates in terpene metabolism; lanosterol biosynthesis; lanosterol from farnesyl diphosphate: step 1/3. In terms of biological role, squalene synthase; part of the gene cluster that mediates the biosynthesis of squalestatin S1 (SQS1, also known as zaragozic acid A), a heavily oxidized fungal polyketide that offers potent cholesterol lowering activity by targeting squalene synthase (SS). Catalyzes the condensation of 2 two farnesyl pyrophosphate moieties to form squalene. The presence of a gene encoding a squalene synthase supports the identification of the cluster as being responsible for SQS1 production and suggests a likely mechanism for self-resistance. This chain is Squalene synthase R6, found in Phoma sp. (strain ATCC 20986 / MF5453).